A 1024-amino-acid chain; its full sequence is Beta-galactosidase 2 (1024 aa).

Positions 103 and 202 each coordinate substrate. Aspartate 202 contributes to the Na(+) binding site. Mg(2+) contacts are provided by glutamate 417, histidine 419, and glutamate 462. Substrate-binding positions include glutamate 462 and glutamate 538 to histidine 541. Glutamate 462 functions as the Proton donor in the catalytic mechanism. Glutamate 538 functions as the Nucleophile in the catalytic mechanism. Asparagine 598 serves as a coordination point for Mg(2+). Residues phenylalanine 602 and asparagine 605 each contribute to the Na(+) site. Substrate is bound by residues asparagine 605 and tryptophan 1000.

Belongs to the glycosyl hydrolase 2 family. In terms of assembly, homotetramer. Requires Mg(2+) as cofactor. Na(+) serves as cofactor.

The enzyme catalyses Hydrolysis of terminal non-reducing beta-D-galactose residues in beta-D-galactosides.. This Klebsiella pneumoniae subsp. pneumoniae (strain ATCC 700721 / MGH 78578) protein is Beta-galactosidase 2.